A 193-amino-acid polypeptide reads, in one-letter code: Putative manganese efflux pump MntP (193 aa).

Transmembrane regions (helical) follow at residues 3–23 (LATLTVLGFSLSADAFAAALG), 39–59 (VGAYFGAFEAAAPLIGWALGL), 65–85 (IAAFDHWVAFTLLAGVGGHMV), 113–133 (LALAALATSIDATAVGIGLAV), 138–158 (ILMACALIGAITTVVAAGGVL), and 173–193 (VLGGLALIGIGLKILIEHLSA).

Belongs to the MntP (TC 9.B.29) family.

It is found in the cell inner membrane. Its function is as follows. Probably functions as a manganese efflux pump. This chain is Putative manganese efflux pump MntP, found in Rhodospirillum rubrum (strain ATCC 11170 / ATH 1.1.1 / DSM 467 / LMG 4362 / NCIMB 8255 / S1).